The sequence spans 299 residues: Delta-9 desaturase-like 2 protein (299 aa).

The helical transmembrane segment at 55–75 (WEAFRFGIILAILTNLCITFS) threads the bilayer. The short motif at 77–82 (HRNLTH) is the Histidine box-1 element. Residues 114–118 (HRFHH) carry the Histidine box-2 motif. The chain crosses the membrane as a helical span at residues 174–194 (LVLHILAFWTLIYLWGGLPYL). Residues 246–250 (HNNHH) carry the Histidine box-3 motif. The helical transmembrane segment at 262–282 (WYQLDITWYLIWFFQALGLAT) threads the bilayer.

It belongs to the fatty acid desaturase type 1 family. It depends on Fe cation as a cofactor.

It is found in the endoplasmic reticulum membrane. It participates in lipid metabolism; polyunsaturated fatty acid biosynthesis. This is Delta-9 desaturase-like 2 protein from Arabidopsis thaliana (Mouse-ear cress).